We begin with the raw amino-acid sequence, 465 residues long: Glutamate--tRNA ligase (465 aa).

The short motif at 8–18 (PSPTGDLHIGG) is the 'HIGH' region element. The 'KMSKS' region signature appears at 235 to 239 (RLSKR). An ATP-binding site is contributed by lysine 238.

It belongs to the class-I aminoacyl-tRNA synthetase family. Glutamate--tRNA ligase type 1 subfamily. In terms of assembly, monomer.

The protein resides in the cytoplasm. The enzyme catalyses tRNA(Glu) + L-glutamate + ATP = L-glutamyl-tRNA(Glu) + AMP + diphosphate. In terms of biological role, catalyzes the attachment of glutamate to tRNA(Glu) in a two-step reaction: glutamate is first activated by ATP to form Glu-AMP and then transferred to the acceptor end of tRNA(Glu). This Dichelobacter nodosus (strain VCS1703A) protein is Glutamate--tRNA ligase.